The primary structure comprises 477 residues: Glycogen synthase (477 aa).

Lysine 15 provides a ligand contact to ADP-alpha-D-glucose.

It belongs to the glycosyltransferase 1 family. Bacterial/plant glycogen synthase subfamily.

The enzyme catalyses [(1-&gt;4)-alpha-D-glucosyl](n) + ADP-alpha-D-glucose = [(1-&gt;4)-alpha-D-glucosyl](n+1) + ADP + H(+). Its pathway is glycan biosynthesis; glycogen biosynthesis. Functionally, synthesizes alpha-1,4-glucan chains using ADP-glucose. The sequence is that of Glycogen synthase from Streptococcus pneumoniae serotype 2 (strain D39 / NCTC 7466).